The chain runs to 185 residues: Ribosome-recycling factor (185 aa).

The protein belongs to the RRF family.

The protein resides in the cytoplasm. In terms of biological role, responsible for the release of ribosomes from messenger RNA at the termination of protein biosynthesis. May increase the efficiency of translation by recycling ribosomes from one round of translation to another. The sequence is that of Ribosome-recycling factor from Xanthomonas campestris pv. campestris (strain 8004).